Reading from the N-terminus, the 471-residue chain is Galactolipase DONGLE, chloroplastic (471 aa).

A chloroplast-targeting transit peptide spans 1–88 (MAAKVFTQNP…PLSRVWREIQ (88 aa)). Residues 44–71 (SSSTMSPPISSSPLSLPSSSSSQAIPPS) form a disordered region. The GXSXG motif lies at 284 to 288 (GHSMG). Ser-286 acts as the Acyl-ester intermediate in catalysis. Catalysis depends on charge relay system residues Asp-349 and His-400.

It belongs to the AB hydrolase superfamily. Lipase family. As to expression, expressed in leaves and seedlings. Not detected in flowers, siliques or roots.

It is found in the plastid. It localises to the chloroplast. It carries out the reaction a 1,2-diacyl-3-O-(beta-D-galactosyl)-sn-glycerol + 2 H2O = 3-beta-D-galactosyl-sn-glycerol + 2 a fatty acid + 2 H(+). It catalyses the reaction a 1,2-diacyl-sn-glycero-3-phosphocholine + H2O = a 2-acyl-sn-glycero-3-phosphocholine + a fatty acid + H(+). The enzyme catalyses a 1,2-diacyl-3-O-[alpha-D-galactosyl-(1-&gt;6)-beta-D-galactosyl]-sn-glycerol + H2O = acyl-3-O-[alpha-D-galactosyl-(1-&gt;6)-beta-D-galactosyl]-sn-glycerol + a fatty acid + H(+). In terms of biological role, sn-1-specific phospholipase that releases free fatty acids from phosphatidylcholine. Has a higher galactolipase activity than phospholipase A1 activity when digalactosyldiacylglycerol (DGDG) is used as substrate. Catalyzes the initial step of jasmonic acid biosynthesis. Required for the biosynthesis of basal-level endogenous jasmonate in vegetative tissues. Regulates leaves growth. Not essential for jasmonate biosynthesis after wounding or upon pathogen infection. This Arabidopsis thaliana (Mouse-ear cress) protein is Galactolipase DONGLE, chloroplastic.